A 470-amino-acid chain; its full sequence is UDP-N-acetylmuramate--L-alanine ligase (470 aa).

118–124 contributes to the ATP binding site; that stretch reads GTHGKTT.

This sequence belongs to the MurCDEF family.

Its subcellular location is the cytoplasm. The catalysed reaction is UDP-N-acetyl-alpha-D-muramate + L-alanine + ATP = UDP-N-acetyl-alpha-D-muramoyl-L-alanine + ADP + phosphate + H(+). It participates in cell wall biogenesis; peptidoglycan biosynthesis. Functionally, cell wall formation. The polypeptide is UDP-N-acetylmuramate--L-alanine ligase (Cereibacter sphaeroides (strain ATCC 17029 / ATH 2.4.9) (Rhodobacter sphaeroides)).